The primary structure comprises 549 residues: Indole-3-acetic acid-amido synthetase GH3.2 (549 aa).

This sequence belongs to the IAA-amido conjugating enzyme family. Expressed in flowers, pollen, cotyledons, stipules, true leaves, hypocotyls, and all parts of the roots except for the primary root tips.

Its function is as follows. Catalyzes the synthesis of indole-3-acetic acid (IAA)-amino acid conjugates, providing a mechanism for the plant to cope with the presence of excess auxin. Strongly reactive with Glu, Gln, Trp, Asp, Ala, Leu, Phe, Gly, Tyr, Met, Ile and Val. Little or no product formation with His, Ser, Thr, Arg, Lys, or Cys. Also active on pyruvic and butyric acid analogs of IAA, PAA and the synthetic auxin naphthaleneacetic acid (NAA). The two chlorinated synthetic auxin herbicides 2,4-D and 3,6-dichloro-o-anisic acid (dicamba) cannot be used as substrates. The sequence is that of Indole-3-acetic acid-amido synthetase GH3.2 (GH3.2) from Arabidopsis thaliana (Mouse-ear cress).